An 855-amino-acid polypeptide reads, in one-letter code: Suppressor of tumorigenicity 14 protein homolog (855 aa).

Topologically, residues 1 to 55 are cytoplasmic; that stretch reads MGSNRGRKAGGGSQDFGAGLKYNSRLENMNGFEEGVEFLPANNAKKVEKRGPRRW. A Phosphoserine modification is found at S13. The chain crosses the membrane as a helical; Signal-anchor for type II membrane protein span at residues 56 to 76; it reads VVLVAVLFSFLLLSLMAGLLV. The Extracellular segment spans residues 77 to 855; it reads WHFHYRNVRV…RDWIKEHTGV (779 aa). Residues 86–203 form the SEA domain; that stretch reads VQKVFNGHLR…TSVVAFPIDP (118 aa). N107 carries an N-linked (GlcNAc...) asparagine glycan. C214 and C244 are oxidised to a cystine. CUB domains are found at residues 214–331 and 340–444; these read CSFA…EATF and CGGF…LAEY. N-linked (GlcNAc...) asparagine glycans are attached at residues N302 and N365. Disulfide bonds link C340–C366 and C397–C410. N421 carries an N-linked (GlcNAc...) asparagine glycan. LDL-receptor class A domains lie at 451 to 488, 489 to 522, 523 to 561, and 565 to 604; these read DPCPGMFMCKTGRCIRKELRCDGWADCPDYSDERYCRC, NATHQFTCKNQFCKPLFWVCDSVNDCGDGSDEEG, CSCPAGSFKCSNGKCLPQSQKCNGKDNCGDGSDEASCDS, and VSCTKYTYRCQNGLCLSKGNPECDGKTDCSDGSDEKNCDC. 13 disulfide bridges follow: C453-C464, C459-C477, C471-C486, C488-C501, C496-C514, C508-C523, C525-C537, C532-C550, C544-C559, C567-C579, C574-C593, C587-C602, and C641-C657. N489 carries an N-linked (GlcNAc...) asparagine glycan. A Peptidase S1 domain is found at 615 to 854; it reads VVGGTNADEG…VRDWIKEHTG (240 aa). Residues H656 and D711 each act as charge relay system in the active site. The N-linked (GlcNAc...) asparagine glycan is linked to N772. 2 disulfides stabilise this stretch: C776-C790 and C801-C830. Catalysis depends on S805, which acts as the Charge relay system.

The protein belongs to the peptidase S1 family. As to quaternary structure, interacts with CDCP1. May interact with TMEFF1. As to expression, highly expressed in intestine, kidney, lung, and thymus. Not expressed in skeletal muscle, liver, heart, testis and brain.

Its subcellular location is the membrane. It catalyses the reaction Cleaves various synthetic substrates with Arg or Lys at the P1 position and prefers small side-chain amino acids, such as Ala and Gly, at the P2 position.. Exhibits trypsin-like activity as defined by cleavage of synthetic substrates with Arg or Lys as the P1 site. Involved in the terminal differentiation of keratinocytes through prostasin (PRSS8) activation and filaggrin (FLG) processing. Proteolytically cleaves and therefore activates TMPRSS13. This chain is Suppressor of tumorigenicity 14 protein homolog (St14), found in Mus musculus (Mouse).